A 160-amino-acid chain; its full sequence is SsrA-binding protein (160 aa).

This sequence belongs to the SmpB family.

The protein resides in the cytoplasm. Its function is as follows. Required for rescue of stalled ribosomes mediated by trans-translation. Binds to transfer-messenger RNA (tmRNA), required for stable association of tmRNA with ribosomes. tmRNA and SmpB together mimic tRNA shape, replacing the anticodon stem-loop with SmpB. tmRNA is encoded by the ssrA gene; the 2 termini fold to resemble tRNA(Ala) and it encodes a 'tag peptide', a short internal open reading frame. During trans-translation Ala-aminoacylated tmRNA acts like a tRNA, entering the A-site of stalled ribosomes, displacing the stalled mRNA. The ribosome then switches to translate the ORF on the tmRNA; the nascent peptide is terminated with the 'tag peptide' encoded by the tmRNA and targeted for degradation. The ribosome is freed to recommence translation, which seems to be the essential function of trans-translation. In Rhodospirillum rubrum (strain ATCC 11170 / ATH 1.1.1 / DSM 467 / LMG 4362 / NCIMB 8255 / S1), this protein is SsrA-binding protein.